The chain runs to 556 residues: Glucose-6-phosphate isomerase (556 aa).

Catalysis depends on E360, which acts as the Proton donor. Residues H391 and K519 contribute to the active site.

Belongs to the GPI family.

It is found in the cytoplasm. It carries out the reaction alpha-D-glucose 6-phosphate = beta-D-fructose 6-phosphate. Its pathway is carbohydrate biosynthesis; gluconeogenesis. It functions in the pathway carbohydrate degradation; glycolysis; D-glyceraldehyde 3-phosphate and glycerone phosphate from D-glucose: step 2/4. Functionally, catalyzes the reversible isomerization of glucose-6-phosphate to fructose-6-phosphate. The sequence is that of Glucose-6-phosphate isomerase from Acinetobacter baumannii (strain ATCC 17978 / DSM 105126 / CIP 53.77 / LMG 1025 / NCDC KC755 / 5377).